We begin with the raw amino-acid sequence, 308 residues long: Cytochrome b (308 aa).

Helical transmembrane passes span 1–21 (FGSL…LMAM), 45–66 (WLIR…YLHI), 81–101 (WNTG…GYVL), and 146–166 (FFAL…IHLT). The heme b site is built by His51 and His65. His150 and His164 together coordinate heme b. His169 is an a ubiquinone binding site. 3 helical membrane-spanning segments follow: residues 194-214 (TKDI…AMFS), 256-276 (LGGV…PFLH), and 288-308 (LSQL…WVGS).

This sequence belongs to the cytochrome b family. The cytochrome bc1 complex contains 11 subunits: 3 respiratory subunits (MT-CYB, CYC1 and UQCRFS1), 2 core proteins (UQCRC1 and UQCRC2) and 6 low-molecular weight proteins (UQCRH/QCR6, UQCRB/QCR7, UQCRQ/QCR8, UQCR10/QCR9, UQCR11/QCR10 and a cleavage product of UQCRFS1). This cytochrome bc1 complex then forms a dimer. Requires heme b as cofactor.

Its subcellular location is the mitochondrion inner membrane. Component of the ubiquinol-cytochrome c reductase complex (complex III or cytochrome b-c1 complex) that is part of the mitochondrial respiratory chain. The b-c1 complex mediates electron transfer from ubiquinol to cytochrome c. Contributes to the generation of a proton gradient across the mitochondrial membrane that is then used for ATP synthesis. In Asthenes dorbignyi (Creamy-breasted canastero), this protein is Cytochrome b (MT-CYB).